A 2351-amino-acid chain; its full sequence is Protein FAM186A (2351 aa).

Positions 296-340 form a coiled coil; sequence EAEKELSLKIIRDLSNENEMLQQKLQDAEEKCEQLIRSKIVIEQL. Disordered regions lie at residues 412-460, 470-489, 505-538, 593-667, 809-838, 868-976, 1805-1837, and 1888-1907; these read ERTP…SWKR, ETSGPNLSDNKSGQKVSEAK, EMKSFSEDKSKSPTEAKRKHLSLTETKSQGGKSG, QFDD…SEQS, STVQKDHKEKEKQRQEQYLQEGQEQMSGMS, LQMK…RGLE, GGQSTSAQFPAPQAPPSPGQLPISRAPPTPGQP, and FQPPATAEQSPYLQAPSTPG. Basic and acidic residues predominate over residues 433 to 446; sequence DSTKDNVSLKKGDF. Over residues 472 to 484 the composition is skewed to polar residues; sequence SGPNLSDNKSGQK. The span at 506-520 shows a compositional bias: basic and acidic residues; it reads MKSFSEDKSKSPTEA. Over residues 527–538 the composition is skewed to polar residues; it reads LTETKSQGGKSG. Basic residues predominate over residues 603 to 612; sequence GKIKGKKHHI. Basic and acidic residues-rich tracts occupy residues 619–632 and 812–823; these read SKEEKTEEKEELTK and QKDHKEKEKQRQ. The stretch at 812–860 forms a coiled coil; sequence QKDHKEKEKQRQEQYLQEGQEQMSGMSLKQQLLGERNLLKEHYEKISEN. Residues 824–838 are compositionally biased toward polar residues; sequence EQYLQEGQEQMSGMS. 3 stretches are compositionally biased toward basic and acidic residues: residues 901–912, 939–955, and 964–976; these read AEQEEKQKQRGQ, LEKENGQMRQIQKEAKH, and KGKEKQKPERGLE. Over residues 1816–1835 the composition is skewed to pro residues; sequence PQAPPSPGQLPISRAPPTPG. Residues 1894-1907 show a composition bias toward polar residues; sequence AEQSPYLQAPSTPG.

The protein belongs to the FAM186 family.

The protein is Protein FAM186A (FAM186A) of Homo sapiens (Human).